Here is a 102-residue protein sequence, read N- to C-terminus: Glutaredoxin 1 (102 aa).

The 96-residue stretch at 1–96 (MNKAILHTII…KLLENQPKTT (96 aa)) folds into the Glutaredoxin domain. A disulfide bridge links Cys17 with Cys20.

It belongs to the glutaredoxin family. In terms of assembly, monomer.

It is found in the cytoplasm. Its function is as follows. Has a glutathione-disulfide oxidoreductase activity in the presence of NADPH and glutathione reductase. Reduces low molecular weight disulfides and proteins. The protein is Glutaredoxin 1 (grxC1) of Rickettsia conorii (strain ATCC VR-613 / Malish 7).